A 928-amino-acid polypeptide reads, in one-letter code: G-protein coupled receptor family C group 6 member A (928 aa).

The signal sequence occupies residues 1–20 (MALLITVVTCFMIILDTSQS). Residues 21-594 (CHTPDDFVAI…EYLDWDDSLA (574 aa)) lie on the Extracellular side of the membrane. N-linked (GlcNAc...) asparagine glycans are attached at residues Asn-332, Asn-555, and Asn-567. The helical transmembrane segment at 595-615 (LLLIALSLLGIAFVLAIGIIF) threads the bilayer. The Cytoplasmic portion of the chain corresponds to 616-630 (TRNLKTPVVKSSGGL). Residues 631–651 (VVCYVMLICHALNFASTGFFI) form a helical membrane-spanning segment. Over 652–669 (GEPQDFACKTRQTLFGVS) the chain is Extracellular. A helical transmembrane segment spans residues 670 to 690 (FTLCVSCILTKSLKILLAFSF). Residues 691–706 (DPKLTMFLKCLYRPVP) lie on the Cytoplasmic side of the membrane. The helical transmembrane segment at 707–727 (IVLTCTGIQVVICTLWLVLAA) threads the bilayer. The Extracellular portion of the chain corresponds to 728–750 (PSVEENISLPRVIILECEEGSAL). Residues 751-771 (AFGTMLGYITVLAFICFVFAF) traverse the membrane as a helical segment. The Cytoplasmic segment spans residues 772–784 (KGRKLPENYNEAK). A helical transmembrane segment spans residues 785–805 (FLTFGMLIYFIAWITFIPVYT). Residues 806–812 (TTFGKYL) are Extracellular-facing. Residues 813–833 (PAVEIIVILISNYGILCCIFF) form a helical membrane-spanning segment. Residues 834 to 928 (PKCYIILCKQ…TLRQKRSSSI (95 aa)) lie on the Cytoplasmic side of the membrane.

Belongs to the G-protein coupled receptor 3 family. In terms of assembly, homodimer; disulfide-linked. In terms of processing, N-glycosylated. As to expression, expressed at high level in liver, lung, spleen and heart. Expressed at lower level in kidney, skeletal muscle and brain. Expressed in 7 dpc, 11 dpc, 15 dpc and 17 dpc embryos.

Its subcellular location is the cell membrane. Functionally, receptor activated by multiple ligands, including osteocalcin (BGLAP), basic amino acids, and various cations. Activated by amino acids with a preference for basic amino acids such as L-Lys, L-Arg and L-ornithine but also by small and polar amino acids. The L-alpha amino acids respond is augmented by divalent cations Ca(2+) and Mg(2+). Seems to act through a G(q)/G(11) and G(i)-coupled pathway. Regulates testosterone production by acting as a ligand for uncarboxylated osteocalcin hormone: osteocalcin-binding at the surface of Leydig cells initiates a signaling response that promotes the expression of enzymes required for testosterone synthesis in a CREB-dependent manner. Mediates the non-genomic effects of androgens in multiple tissue. May coordinate nutritional and hormonal anabolic signals through the sensing of extracellular amino acids, osteocalcin, divalent ions and its responsiveness to anabolic steroids. This Mus musculus (Mouse) protein is G-protein coupled receptor family C group 6 member A (Gprc6a).